The sequence spans 143 residues: Hemoglobin subunit alpha-1 (143 aa).

S2 bears the N-acetylserine mark. The Globin domain occupies S2–R143. H60 is an O2 binding site. Heme b is bound at residue H89.

The protein belongs to the globin family. As to quaternary structure, hb 1 is a heterotetramer of two alpha-1 and two beta-1 chains. Red blood cells.

Functionally, involved in oxygen transport from gills to the various peripheral tissues. In Boreogadus saida (Polar cod), this protein is Hemoglobin subunit alpha-1 (hba1).